The primary structure comprises 106 residues: Heat shock protein HspQ (106 aa).

The tract at residues 80 to 106 (DEHLDNDSMDELSQSIRNQLQAPRLRN) is disordered. A compositionally biased stretch (polar residues) spans 90-100 (ELSQSIRNQLQ).

The protein belongs to the HspQ family.

It is found in the cytoplasm. Involved in the degradation of certain denaturated proteins, including DnaA, during heat shock stress. The chain is Heat shock protein HspQ from Proteus mirabilis (strain HI4320).